Reading from the N-terminus, the 192-residue chain is Phosphoheptose isomerase (192 aa).

One can recognise an SIS domain in the interval L37–K192. N52–G54 is a binding site for substrate. Zn(2+) is bound by residues H61 and E65. Residues E65, N93–D94, S119–S121, S124, and Q172 each bind substrate. Zn(2+) contacts are provided by Q172 and H180.

The protein belongs to the SIS family. GmhA subfamily. Homotetramer. The cofactor is Zn(2+).

Its subcellular location is the cytoplasm. It carries out the reaction 2 D-sedoheptulose 7-phosphate = D-glycero-alpha-D-manno-heptose 7-phosphate + D-glycero-beta-D-manno-heptose 7-phosphate. The protein operates within carbohydrate biosynthesis; D-glycero-D-manno-heptose 7-phosphate biosynthesis; D-glycero-alpha-D-manno-heptose 7-phosphate and D-glycero-beta-D-manno-heptose 7-phosphate from sedoheptulose 7-phosphate: step 1/1. Functionally, catalyzes the isomerization of sedoheptulose 7-phosphate in D-glycero-D-manno-heptose 7-phosphate. This is Phosphoheptose isomerase from Enterobacter sp. (strain 638).